The sequence spans 115 residues: Potassium-transporting ATPase potassium-binding subunit (115 aa).

2 consecutive transmembrane segments (helical) span residues 8 to 28 (YFLL…VAFF) and 60 to 80 (SYCT…YGLL).

This sequence belongs to the KdpA family. The system is composed of three essential subunits: KdpA, KdpB and KdpC.

The protein resides in the cell membrane. In terms of biological role, part of the high-affinity ATP-driven potassium transport (or Kdp) system, which catalyzes the hydrolysis of ATP coupled with the electrogenic transport of potassium into the cytoplasm. This subunit binds the extracellular potassium ions and delivers the ions to the membrane domain of KdpB through an intramembrane tunnel. This chain is Potassium-transporting ATPase potassium-binding subunit, found in Geobacillus stearothermophilus (Bacillus stearothermophilus).